Here is a 96-residue protein sequence, read N- to C-terminus: Small ribosomal subunit protein bS6 (96 aa).

Belongs to the bacterial ribosomal protein bS6 family.

Functionally, binds together with bS18 to 16S ribosomal RNA. This is Small ribosomal subunit protein bS6 from Streptococcus pneumoniae serotype 2 (strain D39 / NCTC 7466).